The sequence spans 62 residues: Sperm protamine P1 (62 aa).

The tract at residues 1-62 (MARYRHSXSR…RYSRRRRRRY (62 aa)) is disordered.

This sequence belongs to the protamine P1 family. As to expression, testis.

It is found in the nucleus. The protein localises to the chromosome. Its function is as follows. Protamines substitute for histones in the chromatin of sperm during the haploid phase of spermatogenesis. They compact sperm DNA into a highly condensed, stable and inactive complex. The chain is Sperm protamine P1 (PRM1) from Petrogale xanthopus (Yellow-footed rock wallaby).